Consider the following 326-residue polypeptide: Acetyl-coenzyme A carboxylase carboxyl transferase subunit alpha (326 aa).

The CoA carboxyltransferase C-terminal domain maps to 44–298 (QLESRAEQLR…KEALLFHLNT (255 aa)).

The protein belongs to the AccA family. Acetyl-CoA carboxylase is a heterohexamer composed of biotin carboxyl carrier protein (AccB), biotin carboxylase (AccC) and two subunits each of ACCase subunit alpha (AccA) and ACCase subunit beta (AccD).

The protein resides in the cytoplasm. It carries out the reaction N(6)-carboxybiotinyl-L-lysyl-[protein] + acetyl-CoA = N(6)-biotinyl-L-lysyl-[protein] + malonyl-CoA. Its pathway is lipid metabolism; malonyl-CoA biosynthesis; malonyl-CoA from acetyl-CoA: step 1/1. Its function is as follows. Component of the acetyl coenzyme A carboxylase (ACC) complex. First, biotin carboxylase catalyzes the carboxylation of biotin on its carrier protein (BCCP) and then the CO(2) group is transferred by the carboxyltransferase to acetyl-CoA to form malonyl-CoA. The polypeptide is Acetyl-coenzyme A carboxylase carboxyl transferase subunit alpha (Synechocystis sp. (strain ATCC 27184 / PCC 6803 / Kazusa)).